A 210-amino-acid polypeptide reads, in one-letter code: Redox-sensing transcriptional repressor Rex (210 aa).

The segment at residues 15–54 (LYYRIFKRFNTDGIEKASSKQIADALGIDSATVRRDFSYF) is a DNA-binding region (H-T-H motif). 89–94 (GCGNIG) contacts NAD(+).

This sequence belongs to the transcriptional regulatory Rex family. As to quaternary structure, homodimer.

Its subcellular location is the cytoplasm. Functionally, modulates transcription in response to changes in cellular NADH/NAD(+) redox state. This chain is Redox-sensing transcriptional repressor Rex, found in Streptococcus agalactiae serotype Ia (strain ATCC 27591 / A909 / CDC SS700).